The sequence spans 534 residues: MKIAVEGCAHGELERIYDTIEGIEKVGGTKIDLLLCCGDFQSTRNLEDLQTMAVPKKYLDMCSFYKYYSGELVAPVLTIFIGGNHEASNYLQELPYGGWVAPNIYYLGYAGVVNVNGVRIAGISGIFKGHDFLRGHHEFPPYTDSTCRSVYHVRQLEVFRLKQISGRVDIFLSHDWPTGIYEYGNKAQLLRKKPFFAADMESGKLGSQPLEELLKAVQPAYWFAAHLHCKFAALVPHNHSQKLGDAESSSSSSSSEDEDEEREKVKKAAPVPPPSKSVPVTKFLALDKCLPRRAFLQVVEVPSDPIEGTPRLEYDAEWLAILHSTNHLISVKENYYYLPGKKAGEFTERSNFTPTEEELEAVTAKFQKLQVPENFERTVPAFDPAEQSDYKHMFVDQPKVQLNPQSNTFCATLGIDDPLCLVLLANGLDLPAVGATECKDRETKSSKLQAVEEDVAEPLVTPTKRKLNLSLPAPTTAAADTTDENVIDLPEEEAEEAIIATETPHVEEPASVPASPNVKKLKRRNQNIYQAQED.

A divalent metal cation-binding residues include cysteine 8, histidine 10, aspartate 39, and asparagine 84. The interval 124–154 (SGIFKGHDFLRGHHEFPPYTDSTCRSVYHVR) is lariat recognition loop. A divalent metal cation-binding residues include histidine 174, histidine 226, and histidine 228. Disordered stretches follow at residues 242-275 (KLGD…PPPS) and 501-534 (TETP…AQED).

The protein belongs to the lariat debranching enzyme family. Fe(2+) serves as cofactor. Zn(2+) is required as a cofactor. The cofactor is Mn(2+).

It is found in the nucleus. Its activity is regulated as follows. Active in presence of diverse metals including Fe(2+), Zn(2+), Mn(2+). Binds two metal cations in two adjacent alpha and beta metal-binding pockets. Functionally, cleaves the 2'-5' phosphodiester linkage at the branch point of lariat intron pre-mRNAs after splicing and converts them into linear molecules that are subsequently degraded. It thereby facilitates ribonucleotide turnover. In Drosophila melanogaster (Fruit fly), this protein is Lariat debranching enzyme (ldbr).